Reading from the N-terminus, the 452-residue chain is Pup--protein ligase (452 aa).

Glu9 contacts Mg(2+). Arg53 contacts ATP. Tyr55 is a binding site for Mg(2+). The active-site Proton acceptor is the Asp57. Glu63 contacts Mg(2+). Residues Thr66 and Trp419 each contribute to the ATP site.

It belongs to the Pup ligase/Pup deamidase family. Pup-conjugating enzyme subfamily.

It catalyses the reaction ATP + [prokaryotic ubiquitin-like protein]-L-glutamate + [protein]-L-lysine = ADP + phosphate + N(6)-([prokaryotic ubiquitin-like protein]-gamma-L-glutamyl)-[protein]-L-lysine.. Its pathway is protein degradation; proteasomal Pup-dependent pathway. The protein operates within protein modification; protein pupylation. Its function is as follows. Catalyzes the covalent attachment of the prokaryotic ubiquitin-like protein modifier Pup to the proteasomal substrate proteins, thereby targeting them for proteasomal degradation. This tagging system is termed pupylation. The ligation reaction involves the side-chain carboxylate of the C-terminal glutamate of Pup and the side-chain amino group of a substrate lysine. This Actinosynnema mirum (strain ATCC 29888 / DSM 43827 / JCM 3225 / NBRC 14064 / NCIMB 13271 / NRRL B-12336 / IMRU 3971 / 101) protein is Pup--protein ligase.